We begin with the raw amino-acid sequence, 303 residues long: uncharacterized protein (303 aa).

Residues 183 to 281 (KDILFYLNNN…GCSPSDYRRQ (99 aa)) enclose the HTH araC/xylS-type domain. 2 consecutive DNA-binding regions (H-T-H motif) follow at residues 200–221 (EQLS…TKEY) and 248–271 (QAEI…LRHV).

This is an uncharacterized protein from Escherichia coli (strain K12).